We begin with the raw amino-acid sequence, 208 residues long: N-(5'-phosphoribosyl)anthranilate isomerase (208 aa).

The protein belongs to the TrpF family.

It carries out the reaction N-(5-phospho-beta-D-ribosyl)anthranilate = 1-(2-carboxyphenylamino)-1-deoxy-D-ribulose 5-phosphate. It functions in the pathway amino-acid biosynthesis; L-tryptophan biosynthesis; L-tryptophan from chorismate: step 3/5. The chain is N-(5'-phosphoribosyl)anthranilate isomerase from Methanococcus vannielii (strain ATCC 35089 / DSM 1224 / JCM 13029 / OCM 148 / SB).